The primary structure comprises 226 residues: Ribonuclease 3 (226 aa).

Residues 6–128 (INRLQRKLGY…LIGGVFLDSN (123 aa)) enclose the RNase III domain. Residue Glu41 participates in Mg(2+) binding. Asp45 is an active-site residue. 2 residues coordinate Mg(2+): Asp114 and Glu117. The active site involves Glu117. Residues 155–225 (DPKTRLQEYL…AEQALKKLEL (71 aa)) form the DRBM domain.

The protein belongs to the ribonuclease III family. In terms of assembly, homodimer. Mg(2+) serves as cofactor.

The protein resides in the cytoplasm. The enzyme catalyses Endonucleolytic cleavage to 5'-phosphomonoester.. Functionally, digests double-stranded RNA. Involved in the processing of primary rRNA transcript to yield the immediate precursors to the large and small rRNAs (23S and 16S). Processes some mRNAs, and tRNAs when they are encoded in the rRNA operon. Processes pre-crRNA and tracrRNA of type II CRISPR loci if present in the organism. This Salmonella typhi protein is Ribonuclease 3.